The chain runs to 433 residues: Adenylosuccinate synthetase (433 aa).

Residues 11-17 and 39-41 each bind GTP; these read GDEGKGK and GHT. The active-site Proton acceptor is Asp-12. Asp-12 and Gly-39 together coordinate Mg(2+). IMP-binding positions include 12–15, 37–40, Thr-134, Arg-148, Asn-230, Thr-245, and Arg-309; these read DEGK and NAGH. Residue His-40 is the Proton donor of the active site. 305–311 is a binding site for substrate; sequence VTTGRKR. GTP contacts are provided by residues Arg-311, 337-339, and 419-421; these read KLD and GTG.

Belongs to the adenylosuccinate synthetase family. In terms of assembly, homodimer. Mg(2+) serves as cofactor.

Its subcellular location is the cytoplasm. The enzyme catalyses IMP + L-aspartate + GTP = N(6)-(1,2-dicarboxyethyl)-AMP + GDP + phosphate + 2 H(+). It functions in the pathway purine metabolism; AMP biosynthesis via de novo pathway; AMP from IMP: step 1/2. In terms of biological role, plays an important role in the de novo pathway and in the salvage pathway of purine nucleotide biosynthesis. Catalyzes the first committed step in the biosynthesis of AMP from IMP. In Saccharomyces cerevisiae (strain YJM789) (Baker's yeast), this protein is Adenylosuccinate synthetase.